Consider the following 504-residue polypeptide: Bifunctional purine biosynthesis protein PurH (504 aa).

The 144-residue stretch at 1–144 folds into the MGS-like domain; sequence MRKRALISVY…KSFKNVVVIS (144 aa).

Belongs to the PurH family.

The enzyme catalyses (6R)-10-formyltetrahydrofolate + 5-amino-1-(5-phospho-beta-D-ribosyl)imidazole-4-carboxamide = 5-formamido-1-(5-phospho-D-ribosyl)imidazole-4-carboxamide + (6S)-5,6,7,8-tetrahydrofolate. It catalyses the reaction IMP + H2O = 5-formamido-1-(5-phospho-D-ribosyl)imidazole-4-carboxamide. The protein operates within purine metabolism; IMP biosynthesis via de novo pathway; 5-formamido-1-(5-phospho-D-ribosyl)imidazole-4-carboxamide from 5-amino-1-(5-phospho-D-ribosyl)imidazole-4-carboxamide (10-formyl THF route): step 1/1. It participates in purine metabolism; IMP biosynthesis via de novo pathway; IMP from 5-formamido-1-(5-phospho-D-ribosyl)imidazole-4-carboxamide: step 1/1. The protein is Bifunctional purine biosynthesis protein PurH of Fusobacterium nucleatum subsp. nucleatum (strain ATCC 25586 / DSM 15643 / BCRC 10681 / CIP 101130 / JCM 8532 / KCTC 2640 / LMG 13131 / VPI 4355).